A 1007-amino-acid polypeptide reads, in one-letter code: Glutamate receptor ionotropic, delta-2 (1007 aa).

Positions 1-23 are cleaved as a signal peptide; sequence MEVFPLLLFLSFCWSRTWDLATA. The interaction with CBLN1 homotrimer stretch occupies residues 24–345; it reads DSIIHIGAIF…NAFHKKLEDR (322 aa). At 24–566 the chain is on the extracellular side; that stretch reads DSIIHIGAIF…DMFACLAPFD (543 aa). Disulfide bonds link Cys83-Cys355, Cys99-Cys131, and Cys298-Cys310. Residue Asn293 is glycosylated (N-linked (GlcNAc...) asparagine). Asn426 is a glycosylation site (N-linked (GlcNAc...) asparagine). 3 residues coordinate Ca(2+): Glu531, Val534, and Asp535. Residues 567–587 form a helical membrane-spanning segment; it reads LSLWACIAGTVLLVGLLVYLL. Over 588–635 the chain is Cytoplasmic; the sequence is NWLNPPRLQMGSMTSTTLYNSMWFVYGSFVQQGGEVPYTTLATRMMMG. A helical transmembrane segment spans residues 636-656; it reads AWWLFALIVISSYTANLAAFL. Residues 657–830 lie on the Extracellular side of the membrane; the sequence is TITRIESSIQ…QKGGALDIKS (174 aa). Residues Asn713 and Asn716 are each glycosylated (N-linked (GlcNAc...) asparagine). 3 residues coordinate Ca(2+): Asp753, Asp755, and Ser757. Residues 831 to 851 form a helical membrane-spanning segment; the sequence is LAGVFCILAAGIVLSCLIAVL. Topologically, residues 852-1007 are cytoplasmic; it reads ETWWSRRKGS…GNDPDRGTSI (156 aa). Ser883 carries the phosphoserine modification. Thr886 carries the post-translational modification Phosphothreonine. Position 890 is a phosphoserine (Ser890). Residues 921 to 991 are interaction with AP4M1; sequence DFRNTHITTT…MSSIPYQPTP (71 aa). The PDZ-binding signature appears at 1005-1007; that stretch reads TSI. Ser1006 carries the phosphoserine modification.

It belongs to the glutamate-gated ion channel (TC 1.A.10.1) family. GRID2 subfamily. As to quaternary structure, tetramer; dimer of dimers. Interacts with EML2, MAGI2 (via PDZ domains) and AP4M1. Interacts with BECN1, GOPC, GRID2IP, SHANK1 and SHANK2. Interacts with CBLN2, but not with CBLN4. Interacts with CBLN1 (via C1q domain); the interaction is CBLN1-NRX1 complex formation-dependent; CBLN1-binding is calcium-independent; CBLN1 hexamers anchor GRID2 N-terminal domain dimers to monomeric NRXN1 isoform beta; promotes synaptogenesis and mediates the D-Serine-dependent long term depression signals and AMPA receptor endocytosis. As to expression, expressed selectively in cerebellar Purkinje cells where it is localized in dendritic spines.

The protein localises to the postsynaptic cell membrane. The enzyme catalyses Ca(2+)(in) = Ca(2+)(out). It catalyses the reaction Na(+)(in) = Na(+)(out). In terms of biological role, member of the ionotropic glutamate receptor family, which plays a crucial role in synaptic organization and signal transduction in the central nervous system. Although it shares structural features with ionotropic glutamate receptors, does not bind glutamate as a primary ligand. Promotes synaptogenesis and mediates the D-Serine-dependent long term depression signals and AMPA receptor endocytosis of cerebellar parallel fiber-Purkinje cell (PF-PC) synapses through the NRX1B-CBLN1-GRID2 triad complex. In the presence of neurexins and cerebellins, forms cation-selective channels that are proposed to be gated by glycine and D-serine. However, recent research disputes this ligand-gated cation channel activity. Cation-selective ion channel activity can be triggered by GRM1 in Purkinje cells. The chain is Glutamate receptor ionotropic, delta-2 (Grid2) from Mus musculus (Mouse).